The primary structure comprises 355 residues: Protein RecA (355 aa).

An ATP-binding site is contributed by 67-74 (GPESSGKT).

It belongs to the RecA family.

Its subcellular location is the cytoplasm. In terms of biological role, can catalyze the hydrolysis of ATP in the presence of single-stranded DNA, the ATP-dependent uptake of single-stranded DNA by duplex DNA, and the ATP-dependent hybridization of homologous single-stranded DNAs. It interacts with LexA causing its activation and leading to its autocatalytic cleavage. This Proteus mirabilis (strain HI4320) protein is Protein RecA.